Here is a 267-residue protein sequence, read N- to C-terminus: Diphthine--ammonia ligase (267 aa).

Phosphotyrosine is present on Y97.

This sequence belongs to the Diphthine--ammonia ligase family.

The enzyme catalyses diphthine-[translation elongation factor 2] + NH4(+) + ATP = diphthamide-[translation elongation factor 2] + AMP + diphosphate + H(+). It functions in the pathway protein modification; peptidyl-diphthamide biosynthesis. Amidase that catalyzes the last step of diphthamide biosynthesis using ammonium and ATP. Diphthamide biosynthesis consists in the conversion of an L-histidine residue in the translation elongation factor eEF-2 (EEF2) to diphthamide. In Bos taurus (Bovine), this protein is Diphthine--ammonia ligase (DPH6).